An 836-amino-acid polypeptide reads, in one-letter code: Pentatricopeptide repeat-containing protein At2g39620 (836 aa).

PPR repeat units follow at residues Met1–Pro35, His36–Pro62, Gly63–Pro98, Asp99–Ser133, Asp134–Lys164, Asp165–Ile199, Asp200–Lys230, Ile233–Lys263, Asp264–Met298, Asn299–Gly333, Asp334–Arg364, Asp365–Pro399, Asn400–Ser434, Glu435–Lys465, Asp466–Pro500, Asp501–Ser535, Glu536–Glu566, Ser568–Pro602, Asn603–Ser637, Gln638–Lys668, Tyr669–Pro703, Asp704–Arg734, and Glu740–Lys770. The segment at Val775–Val836 is type E motif; degenerate.

Belongs to the PPR family. PCMP-E subfamily.

The sequence is that of Pentatricopeptide repeat-containing protein At2g39620 (PCMP-E33) from Arabidopsis thaliana (Mouse-ear cress).